Consider the following 235-residue polypeptide: Ubiquinone biosynthesis O-methyltransferase (235 aa).

The S-adenosyl-L-methionine site is built by R36, G56, D77, and M122.

It belongs to the methyltransferase superfamily. UbiG/COQ3 family.

It carries out the reaction a 3-demethylubiquinol + S-adenosyl-L-methionine = a ubiquinol + S-adenosyl-L-homocysteine + H(+). The catalysed reaction is a 3-(all-trans-polyprenyl)benzene-1,2-diol + S-adenosyl-L-methionine = a 2-methoxy-6-(all-trans-polyprenyl)phenol + S-adenosyl-L-homocysteine + H(+). Its pathway is cofactor biosynthesis; ubiquinone biosynthesis. Its function is as follows. O-methyltransferase that catalyzes the 2 O-methylation steps in the ubiquinone biosynthetic pathway. The polypeptide is Ubiquinone biosynthesis O-methyltransferase (Leptothrix cholodnii (strain ATCC 51168 / LMG 8142 / SP-6) (Leptothrix discophora (strain SP-6))).